A 456-amino-acid chain; its full sequence is Tyrosine phenol-lyase (456 aa).

At lysine 257 the chain carries N6-(pyridoxal phosphate)lysine.

The protein belongs to the beta-eliminating lyase family. Homotetramer. It depends on pyridoxal 5'-phosphate as a cofactor.

It catalyses the reaction L-tyrosine + H2O = phenol + pyruvate + NH4(+). The protein is Tyrosine phenol-lyase (tpl) of Citrobacter freundii.